The sequence spans 880 residues: Alanine--tRNA ligase (880 aa).

Positions 568, 572, 670, and 674 each coordinate Zn(2+).

Belongs to the class-II aminoacyl-tRNA synthetase family. Zn(2+) is required as a cofactor.

The protein localises to the cytoplasm. The enzyme catalyses tRNA(Ala) + L-alanine + ATP = L-alanyl-tRNA(Ala) + AMP + diphosphate. In terms of biological role, catalyzes the attachment of alanine to tRNA(Ala) in a two-step reaction: alanine is first activated by ATP to form Ala-AMP and then transferred to the acceptor end of tRNA(Ala). Also edits incorrectly charged Ser-tRNA(Ala) and Gly-tRNA(Ala) via its editing domain. The sequence is that of Alanine--tRNA ligase from Exiguobacterium sibiricum (strain DSM 17290 / CCUG 55495 / CIP 109462 / JCM 13490 / 255-15).